A 328-amino-acid chain; its full sequence is UPF0421 protein SAV1889 (328 aa).

Transmembrane regions (helical) follow at residues 19–39, 61–81, 108–128, and 132–152; these read IAIF…IYAI, LPAT…FGDQ, VAVL…IFNF, and TLTA…VFPP.

The protein belongs to the UPF0421 family.

The protein resides in the cell membrane. This is UPF0421 protein SAV1889 from Staphylococcus aureus (strain Mu50 / ATCC 700699).